The following is a 230-amino-acid chain: Large ribosomal subunit protein uL1 (230 aa).

It belongs to the universal ribosomal protein uL1 family. Part of the 50S ribosomal subunit.

In terms of biological role, binds directly to 23S rRNA. The L1 stalk is quite mobile in the ribosome, and is involved in E site tRNA release. Functionally, protein L1 is also a translational repressor protein, it controls the translation of the L11 operon by binding to its mRNA. This chain is Large ribosomal subunit protein uL1, found in Bradyrhizobium diazoefficiens (strain JCM 10833 / BCRC 13528 / IAM 13628 / NBRC 14792 / USDA 110).